The chain runs to 945 residues: Kinesin-like protein CIN8 (945 aa).

Positions 22 to 409 constitute a Kinesin motor domain; sequence NITVAVRCRG…LEYAAKAKNI (388 aa). 114–121 provides a ligand contact to ATP; that stretch reads GMTSTGKT. Residues 190 to 243 form a disordered region; the sequence is IFDSSSMNHSSRASSQSNSPREPEVAHNGFSRRRQRPPPVKANRMSATKQQLSE. Positions 193-208 are enriched in low complexity; the sequence is SSSMNHSSRASSQSNS. The segment covering 234–243 has biased composition (polar residues); the sequence is MSATKQQLSE. 2 coiled-coil regions span residues 450–562 and 634–675; these read MSHE…DIKE and LKEF…YLDQ.

This sequence belongs to the TRAFAC class myosin-kinesin ATPase superfamily. Kinesin family. BimC subfamily.

The protein localises to the cytoplasm. Its subcellular location is the cytoskeleton. It localises to the spindle. Elongates the mitotic spindle by interacting with spindle microtubules to generate an outward force pushing spindle poles apart. Following spindle assembly, CIN8 and KIP1 apparently act to oppose a force, possibly generated by KAR3, that draws separated poles back together. This Eremothecium gossypii (strain ATCC 10895 / CBS 109.51 / FGSC 9923 / NRRL Y-1056) (Yeast) protein is Kinesin-like protein CIN8 (CIN8).